A 749-amino-acid chain; its full sequence is Chitin synthase G (749 aa).

5 helical membrane passes run 40 to 60, 73 to 93, 421 to 441, 451 to 471, and 483 to 503; these read CVGELVGIFLPVMIAILPLPP, VLQWFAFWAFSALLIIPWLFC, FMQNTIRTTALLFFILAISII, PVGFIAVSLGLNYILMVYFGI, and LMFILNPFFNWLYIVYGIFTA. Residues 683–749 are disordered; the sequence is IESGSGIPSG…RRYMQPEQMV (67 aa). The span at 697–718 shows a compositional bias: polar residues; it reads LSSSVPQSGMQQSRAVPGNMSQ. A glycan (N-linked (GlcNAc...) asparagine) is linked at Asn715. Residues 728–742 show a composition bias toward basic residues; the sequence is YTKRPSRIPRQKRRY.

It belongs to the chitin synthase family. Class VI subfamily.

It is found in the cell membrane. It carries out the reaction [(1-&gt;4)-N-acetyl-beta-D-glucosaminyl](n) + UDP-N-acetyl-alpha-D-glucosamine = [(1-&gt;4)-N-acetyl-beta-D-glucosaminyl](n+1) + UDP + H(+). In terms of biological role, polymerizes chitin, a structural polymer of the cell wall and septum, by transferring the sugar moiety of UDP-GlcNAc to the non-reducing end of the growing chitin polymer. Plays an important role in septal growth or maintenance. Mediates colony spore formation. The chain is Chitin synthase G from Aspergillus niger (strain ATCC MYA-4892 / CBS 513.88 / FGSC A1513).